A 151-amino-acid polypeptide reads, in one-letter code: Putative phosphatidylglycerol/phosphatidylinositol transfer protein 1 (151 aa).

An N-terminal signal peptide occupies residues 1 to 26; that stretch reads MKHSKNQIVYITFFIIILIVVKPIES.

Belongs to the NPC2 family. In terms of assembly, monomer.

Its function is as follows. Catalyzes the intermembrane transfer of phosphatidylglycerol and phosphatidylinositol. In Dictyostelium discoideum (Social amoeba), this protein is Putative phosphatidylglycerol/phosphatidylinositol transfer protein 1.